A 160-amino-acid polypeptide reads, in one-letter code: V-type proton ATPase subunit c (160 aa).

Topologically, residues 1-8 (MTELCPVY) are vacuolar. A helical membrane pass occupies residues 9 to 31 (APFFGAIGCASAIIFTSLGAAYG). Over 32-53 (TAKSGVGICATCVLRPDLLFKN) the chain is Cytoplasmic. Residues 54–74 (IVPVIMAGIIAIYGLVVSVLV) form a helical membrane-spanning segment. At 75–90 (CYSLGQKQALYTGFIQ) the chain is on the vacuolar side. A helical membrane pass occupies residues 91-112 (LGAGLSVGLSGLAAGFAIGIVG). Topologically, residues 113-124 (DAGVRGSSQQPR) are cytoplasmic. A helical transmembrane segment spans residues 125–150 (LFVGMILILIFAEVLGLYGLIVALLL). Over 151–160 (NSRATQDVVC) the chain is Vacuolar.

This sequence belongs to the V-ATPase proteolipid subunit family. In terms of assembly, V-ATPase is a heteromultimeric enzyme composed of a peripheral catalytic V1 complex (components A to H) attached to an integral membrane V0 proton pore complex (components: a, c, c', c'', d, e, f and VOA1). The decameric c-ring forms the proton-conducting pore, and is composed of eight proteolipid subunits c, one subunit c' and one subunit c''.

It is found in the vacuole membrane. In terms of biological role, proton-conducting pore forming subunit of the V0 complex of vacuolar(H+)-ATPase (V-ATPase), a multisubunit enzyme composed of a peripheral complex (V1) that hydrolyzes ATP and a membrane integral complex (V0) that translocates protons. V-ATPase is responsible for acidifying and maintaining the pH of intracellular compartments. The sequence is that of V-type proton ATPase subunit c (VMA3) from Saccharomyces cerevisiae (strain ATCC 204508 / S288c) (Baker's yeast).